The sequence spans 306 residues: Glutaminase (306 aa).

Ser-64, Asn-115, Glu-159, Asn-166, Tyr-190, Tyr-242, and Val-260 together coordinate substrate.

The protein belongs to the glutaminase family. Homotetramer.

The enzyme catalyses L-glutamine + H2O = L-glutamate + NH4(+). In Aliivibrio fischeri (strain MJ11) (Vibrio fischeri), this protein is Glutaminase.